We begin with the raw amino-acid sequence, 331 residues long: UDP-N-acetylenolpyruvoylglucosamine reductase (331 aa).

Residues Arg-54–Gly-221 enclose the FAD-binding PCMH-type domain. Residue Arg-200 is part of the active site. Catalysis depends on Ser-251, which acts as the Proton donor. The active site involves Glu-321.

It belongs to the MurB family. FAD is required as a cofactor.

Its subcellular location is the cytoplasm. The enzyme catalyses UDP-N-acetyl-alpha-D-muramate + NADP(+) = UDP-N-acetyl-3-O-(1-carboxyvinyl)-alpha-D-glucosamine + NADPH + H(+). Its pathway is cell wall biogenesis; peptidoglycan biosynthesis. Functionally, cell wall formation. The chain is UDP-N-acetylenolpyruvoylglucosamine reductase from Nostoc sp. (strain PCC 7120 / SAG 25.82 / UTEX 2576).